The chain runs to 1192 residues: Methionine synthase (1192 aa).

The Hcy-binding domain occupies Met-1–Val-312. Residues Cys-231, Cys-297, and Cys-298 each coordinate Zn(2+). One can recognise a Pterin-binding domain in the interval Val-343 to Ala-601. The region spanning Arg-635 to Gly-728 is the B12-binding N-terminal domain. The region spanning Lys-729–Glu-866 is the B12-binding domain. Methylcob(III)alamin is bound by residues Gly-739–Asp-743, His-742, Ser-787, and Ala-845. The tract at residues Arg-860–Val-904 is disordered. The span at Ile-872–Arg-881 shows a compositional bias: basic and acidic residues. Positions Lys-882–Ala-893 are enriched in basic residues. In terms of domain architecture, AdoMet activation spans Ala-893 to Val-1192. S-adenosyl-L-methionine contacts are provided by residues Asp-940, Arg-1135, and Tyr-1189 to Phe-1190.

It belongs to the vitamin-B12 dependent methionine synthase family. Methylcob(III)alamin is required as a cofactor. It depends on Zn(2+) as a cofactor.

It carries out the reaction (6S)-5-methyl-5,6,7,8-tetrahydrofolate + L-homocysteine = (6S)-5,6,7,8-tetrahydrofolate + L-methionine. It participates in amino-acid biosynthesis; L-methionine biosynthesis via de novo pathway; L-methionine from L-homocysteine (MetH route): step 1/1. Its function is as follows. Catalyzes the transfer of a methyl group from methyl-cobalamin to homocysteine, yielding enzyme-bound cob(I)alamin and methionine. Subsequently, remethylates the cofactor using methyltetrahydrofolate. The chain is Methionine synthase (metH) from Mycobacterium tuberculosis (strain ATCC 25618 / H37Rv).